We begin with the raw amino-acid sequence, 198 residues long: FMN-dependent NADH:quinone oxidoreductase 6 (198 aa).

96-99 (MYNF) is an FMN binding site.

The protein belongs to the azoreductase type 1 family. In terms of assembly, homodimer. FMN serves as cofactor.

The enzyme catalyses 2 a quinone + NADH + H(+) = 2 a 1,4-benzosemiquinone + NAD(+). It carries out the reaction N,N-dimethyl-1,4-phenylenediamine + anthranilate + 2 NAD(+) = 2-(4-dimethylaminophenyl)diazenylbenzoate + 2 NADH + 2 H(+). Quinone reductase that provides resistance to thiol-specific stress caused by electrophilic quinones. In terms of biological role, also exhibits azoreductase activity. Catalyzes the reductive cleavage of the azo bond in aromatic azo compounds to the corresponding amines. In Burkholderia lata (strain ATCC 17760 / DSM 23089 / LMG 22485 / NCIMB 9086 / R18194 / 383), this protein is FMN-dependent NADH:quinone oxidoreductase 6.